Here is a 581-residue protein sequence, read N- to C-terminus: Membrane protein insertase YidC (581 aa).

The helical transmembrane segment at 7–27 (ILIVALAVVSYLMVLQWNEDY) threads the bilayer. The segment at 41-62 (AATPALPDTPADTASTGGDDIP) is disordered. The next 5 helical transmembrane spans lie at 365–385 (TVDYGFLWFLAQPIFWLLEVI), 388–408 (LLGNWGWSIIVLTIIIKLIFF), 458–478 (LGGCLPILVQMPVFLALYWVL), 489–509 (WMFWITDLSIKDPFFILPIIM), and 536–556 (PIIFTFFFLWFPAGLVLYWVV).

It belongs to the OXA1/ALB3/YidC family. Type 1 subfamily. As to quaternary structure, interacts with the Sec translocase complex via SecD. Specifically interacts with transmembrane segments of nascent integral membrane proteins during membrane integration.

It is found in the cell inner membrane. Functionally, required for the insertion and/or proper folding and/or complex formation of integral membrane proteins into the membrane. Involved in integration of membrane proteins that insert both dependently and independently of the Sec translocase complex, as well as at least some lipoproteins. Aids folding of multispanning membrane proteins. The sequence is that of Membrane protein insertase YidC from Ectopseudomonas mendocina (strain ymp) (Pseudomonas mendocina).